The sequence spans 95 residues: UPF0045 protein CPE1503 (95 aa).

The protein belongs to the UPF0045 family.

The polypeptide is UPF0045 protein CPE1503 (Clostridium perfringens (strain 13 / Type A)).